The following is a 638-amino-acid chain: Sodium- and chloride-dependent neutral and basic amino acid transporter B(0+) (638 aa).

Residues 1-44 lie on the Cytoplasmic side of the membrane; it reads MDRLKCPNFFKCRQKEKVTASSENFHVGENDENQERGNWSKKSD. The next 3 helical transmembrane spans lie at 45–65, 72–92, and 110–130; these read YLLSMVGYAVGLGNVWRFPYL, GAFLIPYAIMLALAGLPLFFL, and ILPLFQGVGITMVLISVFVAI. Residues 131-230 are Extracellular-facing; that stretch reads YYNVIIAYSL…RSSGMDETGV (100 aa). 6 N-linked (GlcNAc...) asparagine glycosylation sites follow: Asn-155, Asn-163, Asn-174, Asn-185, Asn-193, and Asn-198. Transmembrane regions (helical) follow at residues 231-251 and 257-277; these read VVWYLALCLLLAWLIVGAALF and SGKVVYFTALFPYVVLLILLI. A glycan (N-linked (GlcNAc...) asparagine) is linked at Asn-298. The next 7 membrane-spanning stretches (helical) occupy residues 311–331, 344–364, 395–415, 453–473, 476–496, 524–544, and 559–579; these read AATQIFYSLSVAWGGLVALSS, IIVCLTNCLTSVFAGFAIFSI, LAQLPAGPFWSILFFFMLLTL, ILFLLGLLCVTQAGIYWVHLI, FCAGWGILIAAILEIAGIIWI, CWFVITPILLSAILVWSLVKF, and VALGWCMIIFCIIWIPIMAII. Residues 580–638 lie on the Cytoplasmic side of the membrane; the sequence is KIVQAEGNILQRIISCCRPASNWGPYLEKHRGERYRDMAEPAKETDHEIPTISGSTKPE. Over residues 618-628 the composition is skewed to basic and acidic residues; the sequence is AEPAKETDHEI. The interval 618–638 is disordered; that stretch reads AEPAKETDHEIPTISGSTKPE.

Belongs to the sodium:neurotransmitter symporter (SNF) (TC 2.A.22) family. SLC6A14 subfamily. As to expression, expressed in the distal region of the intestinal tract: cecum and colon.

The protein resides in the membrane. It localises to the apical cell membrane. The catalysed reaction is glycine(out) + chloride(out) + 2 Na(+)(out) = glycine(in) + chloride(in) + 2 Na(+)(in). It catalyses the reaction L-leucine(out) + chloride(out) + 2 Na(+)(out) = L-leucine(in) + chloride(in) + 2 Na(+)(in). It carries out the reaction L-glutamine(out) + chloride(out) + 2 Na(+)(out) = L-glutamine(in) + chloride(in) + 2 Na(+)(in). The enzyme catalyses L-arginine(out) + chloride(out) + 2 Na(+)(out) = L-arginine(in) + chloride(in) + 2 Na(+)(in). The catalysed reaction is (R)-carnitine(out) + chloride(out) + 2 Na(+)(out) = (R)-carnitine(in) + chloride(in) + 2 Na(+)(in). It catalyses the reaction O-propanoyl-(R)-carnitine(out) + chloride(out) + 2 Na(+)(out) = O-propanoyl-(R)-carnitine(in) + chloride(in) + 2 Na(+)(in). It carries out the reaction L-isoleucine(out) + chloride(out) + 2 Na(+)(out) = L-isoleucine(in) + chloride(in) + 2 Na(+)(in). The enzyme catalyses L-methionine(out) + chloride(out) + 2 Na(+)(out) = L-methionine(in) + chloride(in) + 2 Na(+)(in). The catalysed reaction is L-valine(out) + chloride(out) + 2 Na(+)(out) = L-valine(in) + chloride(in) + 2 Na(+)(in). It catalyses the reaction L-alanine(out) + chloride(out) + 2 Na(+)(out) = L-alanine(in) + chloride(in) + 2 Na(+)(in). It carries out the reaction L-serine(out) + chloride(out) + 2 Na(+)(out) = L-serine(in) + chloride(in) + 2 Na(+)(in). The enzyme catalyses L-cysteine(out) + chloride(out) + 2 Na(+)(out) = L-cysteine(in) + chloride(in) + 2 Na(+)(in). The catalysed reaction is L-asparagine(out) + chloride(out) + 2 Na(+)(out) = L-asparagine(in) + chloride(in) + 2 Na(+)(in). It catalyses the reaction L-threonine(out) + chloride(out) + 2 Na(+)(out) = L-threonine(in) + chloride(in) + 2 Na(+)(in). It carries out the reaction L-phenylalanine(out) + chloride(out) + 2 Na(+)(out) = L-phenylalanine(in) + chloride(in) + 2 Na(+)(in). The enzyme catalyses L-tryptophan(out) + chloride(out) + 2 Na(+)(out) = L-tryptophan(in) + chloride(in) + 2 Na(+)(in). The catalysed reaction is L-tyrosine(out) + chloride(out) + 2 Na(+)(out) = L-tyrosine(in) + chloride(in) + 2 Na(+)(in). It catalyses the reaction L-histidine(out) + chloride(out) + 2 Na(+)(out) = L-histidine(in) + chloride(in) + 2 Na(+)(in). It carries out the reaction L-lysine(out) + chloride(out) + 2 Na(+)(out) = L-lysine(in) + chloride(in) + 2 Na(+)(in). The enzyme catalyses O-butanoyl-(R)-carnitine(out) + chloride(out) + 2 Na(+)(out) = O-butanoyl-(R)-carnitine(in) + chloride(in) + 2 Na(+)(in). Amino acid transporter that plays an important role in the absorption of amino acids in the intestinal tract. Mediates the uptake of a broad range of neutral and cationic amino acids (with the exception of proline) in a Na(+)/Cl(-)-dependent manner. Transports non-alpha-amino acids such as beta-alanine with low affinity, and has a higher affinity for dipolar and cationic amino acids such as leucine and lysine. Can also transport carnitine, butyrylcarnitine and propionylcarnitine coupled to the transmembrane gradients of Na(+) and Cl(-). The chain is Sodium- and chloride-dependent neutral and basic amino acid transporter B(0+) from Mus musculus (Mouse).